The following is a 915-amino-acid chain: Pentatricopeptide repeat-containing protein At5g65560 (915 aa).

PPR repeat units follow at residues 182 to 216, 217 to 251, 252 to 286, 287 to 321, 322 to 356, 357 to 391, 392 to 426, 427 to 460, 461 to 495, 496 to 530, 531 to 565, 566 to 600, 601 to 635, 636 to 670, 671 to 705, 724 to 758, 759 to 794, 795 to 829, 830 to 864, and 865 to 899; these read IIGC…KVCP, NIYT…GLDP, DFFT…GCRR, NEVA…ECFP, TVRT…GIKP, NIHT…GLMP, NVIT…KLSP, NTRT…KVLP, DVVT…GLVP, DQWT…GVNP, NVVM…NCLP, NSLT…GLQP, TVST…GTKP, DAHT…GVSP, DLFT…GCEP, KQKG…SVTP, NAKS…GISP, SELV…GHLP, QLES…GYYE, and DELA…GCKF.

It belongs to the PPR family. P subfamily.

The chain is Pentatricopeptide repeat-containing protein At5g65560 from Arabidopsis thaliana (Mouse-ear cress).